Here is a 567-residue protein sequence, read N- to C-terminus: Alpha-glucosidase (567 aa).

The first 17 residues, 1–17 (MKAVIVFCLMALSIVDA), serve as a signal peptide directing secretion. N-linked (GlcNAc...) asparagine glycosylation is found at Asn-88 and Asn-123. Asp-223 acts as the Nucleophile in catalysis. N-linked (GlcNAc...) asparagine glycosylation is present at Asn-247. The active-site Proton donor is the Glu-286. Asn-290, Asn-313, Asn-319, Asn-499, and Asn-507 each carry an N-linked (GlcNAc...) asparagine glycan.

Monomer. In terms of tissue distribution, expressed specifically in the hypopharyngeal glands of worker bees. Also found in the brain of worker bees (at protein level).

It carries out the reaction Hydrolysis of terminal, non-reducing (1-&gt;4)-linked alpha-D-glucose residues with release of alpha-D-glucose.. Its function is as follows. Converts sucrose in nectar to glucose and fructose. In Apis mellifera (Honeybee), this protein is Alpha-glucosidase.